The chain runs to 390 residues: Leu/Ile/Val-binding protein homolog 6 (390 aa).

The N-terminal stretch at 1–21 (MKKIALTALAVFSLAASAAYA) is a signal peptide.

The protein belongs to the leucine-binding protein family.

In terms of biological role, component of an amino-acid transport system. The polypeptide is Leu/Ile/Val-binding protein homolog 6 (Brucella abortus (strain 2308)).